The following is a 131-amino-acid chain: CGIDYYTRAPGYNNESFVIYMFIVHFLIPLFIISFCYGNLLCAVKAAAAAQEESETTQRAEREVTRMVIMMVISYLVSWVPYASVAWYIFSNQGSEFGPVFMTIPAFFAKSSALYNPLIYVLMNKQFRHCM.

At 1–16 (CGIDYYTRAPGYNNES) the chain is on the extracellular side. A glycan (N-linked (GlcNAc...) asparagine) is linked at Asn-14. The chain crosses the membrane as a helical span at residues 17–38 (FVIYMFIVHFLIPLFIISFCYG). Topologically, residues 39 to 66 (NLLCAVKAAAAAQEESETTQRAEREVTR) are cytoplasmic. Residues 67–88 (MVIMMVISYLVSWVPYASVAWY) traverse the membrane as a helical segment. Over 89-100 (IFSNQGSEFGPV) the chain is Extracellular. Residues 101-122 (FMTIPAFFAKSSALYNPLIYVL) form a helical membrane-spanning segment. Lys-110 bears the N6-(retinylidene)lysine mark. At 123–131 (MNKQFRHCM) the chain is on the cytoplasmic side.

This sequence belongs to the G-protein coupled receptor 1 family. Opsin subfamily. Post-translationally, phosphorylated on some or all of the serine and threonine residues present in the C-terminal region. Contains one covalently linked retinal chromophore.

The protein localises to the membrane. It is found in the cell projection. Its subcellular location is the cilium. It localises to the photoreceptor outer segment. Photoreceptor required for image-forming vision at low light intensity. While most salt water fish species use retinal as chromophore, most freshwater fish use 3-dehydroretinal, or a mixture of retinal and 3-dehydroretinal. Light-induced isomerization of 11-cis to all-trans retinal triggers a conformational change that activates signaling via G-proteins. Subsequent receptor phosphorylation mediates displacement of the bound G-protein alpha subunit by arrestin and terminates signaling. The protein is Rhodopsin (rho) of Coregonus autumnalis (Arctic cisco).